A 216-amino-acid polypeptide reads, in one-letter code: UPF0502 protein Spea_2482 (216 aa).

This sequence belongs to the UPF0502 family.

The sequence is that of UPF0502 protein Spea_2482 from Shewanella pealeana (strain ATCC 700345 / ANG-SQ1).